We begin with the raw amino-acid sequence, 184 residues long: Small ribosomal subunit protein uS4 (184 aa).

The S4 RNA-binding domain maps to 108–172; it reads RRLQTQVHRL…SPMTKESHPE (65 aa). Residues 163 to 184 are disordered; it reads SPMTKESHPERPAQIAASVVEE.

This sequence belongs to the universal ribosomal protein uS4 family. As to quaternary structure, part of the 30S ribosomal subunit. Contacts protein S5. The interaction surface between S4 and S5 is involved in control of translational fidelity.

In terms of biological role, one of the primary rRNA binding proteins, it binds directly to 16S rRNA where it nucleates assembly of the body of the 30S subunit. With S5 and S12 plays an important role in translational accuracy. The chain is Small ribosomal subunit protein uS4 from Methanococcoides burtonii (strain DSM 6242 / NBRC 107633 / OCM 468 / ACE-M).